We begin with the raw amino-acid sequence, 413 residues long: Arginine biosynthesis bifunctional protein ArgJ (413 aa).

Substrate is bound by residues Thr-160, Lys-186, Thr-197, Glu-284, Asn-408, and Ser-413. Thr-197 serves as the catalytic Nucleophile.

The protein belongs to the ArgJ family. Heterotetramer of two alpha and two beta chains.

The protein resides in the cytoplasm. The catalysed reaction is N(2)-acetyl-L-ornithine + L-glutamate = N-acetyl-L-glutamate + L-ornithine. It catalyses the reaction L-glutamate + acetyl-CoA = N-acetyl-L-glutamate + CoA + H(+). It participates in amino-acid biosynthesis; L-arginine biosynthesis; L-ornithine and N-acetyl-L-glutamate from L-glutamate and N(2)-acetyl-L-ornithine (cyclic): step 1/1. Its pathway is amino-acid biosynthesis; L-arginine biosynthesis; N(2)-acetyl-L-ornithine from L-glutamate: step 1/4. Catalyzes two activities which are involved in the cyclic version of arginine biosynthesis: the synthesis of N-acetylglutamate from glutamate and acetyl-CoA as the acetyl donor, and of ornithine by transacetylation between N(2)-acetylornithine and glutamate. This is Arginine biosynthesis bifunctional protein ArgJ from Burkholderia mallei (strain ATCC 23344).